The primary structure comprises 179 residues: ATP-dependent protease subunit HslV (179 aa).

T7 is a catalytic residue. 3 residues coordinate Na(+): A162, C165, and T168.

The protein belongs to the peptidase T1B family. HslV subfamily. In terms of assembly, a double ring-shaped homohexamer of HslV is capped on each side by a ring-shaped HslU homohexamer. The assembly of the HslU/HslV complex is dependent on binding of ATP.

It localises to the cytoplasm. The catalysed reaction is ATP-dependent cleavage of peptide bonds with broad specificity.. With respect to regulation, allosterically activated by HslU binding. Its function is as follows. Protease subunit of a proteasome-like degradation complex believed to be a general protein degrading machinery. This is ATP-dependent protease subunit HslV from Nitrosococcus oceani (strain ATCC 19707 / BCRC 17464 / JCM 30415 / NCIMB 11848 / C-107).